The chain runs to 724 residues: Coiled-coil domain-containing protein 175 (724 aa).

Coiled-coil stretches lie at residues 131–164 (VEMS…NTAL), 203–256 (INLE…RKET), 282–373 (VVLS…RQYK), 426–534 (ELHR…ERKL), and 565–627 (QLQV…QLRE).

The polypeptide is Coiled-coil domain-containing protein 175 (CCDC175) (Bos taurus (Bovine)).